The sequence spans 77 residues: U11-lycotoxin-Ls1b (77 aa).

The N-terminal stretch at 1–20 (MKLIIFTGLALFAIVSLIEA) is a signal peptide. A propeptide spanning residues 21 to 26 (EEESGR) is cleaved from the precursor.

It belongs to the neurotoxin 19 (CSTX) family. 10 (U11-Lctx) subfamily. Contains 4 disulfide bonds. As to expression, expressed by the venom gland.

It localises to the secreted. The protein is U11-lycotoxin-Ls1b of Lycosa singoriensis (Wolf spider).